Consider the following 212-residue polypeptide: Pyrrolidone-carboxylate peptidase (212 aa).

Residues Glu80, Cys143, and His165 contribute to the active site.

The protein belongs to the peptidase C15 family. As to quaternary structure, homotetramer.

The protein localises to the cytoplasm. It catalyses the reaction Release of an N-terminal pyroglutamyl group from a polypeptide, the second amino acid generally not being Pro.. In terms of biological role, removes 5-oxoproline from various penultimate amino acid residues except L-proline. The sequence is that of Pyrrolidone-carboxylate peptidase from Aliivibrio fischeri (strain MJ11) (Vibrio fischeri).